Reading from the N-terminus, the 1128-residue chain is MTDNLTTTHGGSTTLELLAQYNDHRSKKDKSIEHIEKGTCSGKERNPSYDEIFTENIKLKLQVQEYETEIESLEKVIDMLQKNREASLEVVLEQVQNDSRDSYVNDQSFVLPPRSAERKAHIKSLNLPIPTLSPPLQQGSDVALETSVTPTVPQIGVTSNTSISRKHLQNMILNDEIEANSSFSSPKIINRSVSSPTKIHSEQLASPAASVTYTTSRITIKSPNKGSKSPLQERLRSPQNPNRMTAVINNHLHSPLKASTSNNLDELTESKSQQLTNDAIQKNDRVYSSITSSAYTTGTPTSAAKSPSSLLEVKEGENKALGFSPASKEKLDDFTQLLDSSFGEEDLVNTDSKDPLSIKSTINESLPPPPAPPTFFSPTSSGNIKNSTPLSSHLASPVILNKKDDNFGAQSAKNLKKPVLTSSLPNLSTKLSTTSQNASLPPNPPVESSSKQKQLGETASIHSTNTLNTFSSTPQGSLKTLRRPHASSVSTVKSVAQSLKSDIPLFVQPEDFGTIQIEVLSTLYRDNEDDLSILIAIIDRKSGKEMFKFSKSIHKVRELDVYMKSHVPDLPLPTLPDRQLFQTLSPTKVDTRKNILNQYYTSIFSVPEFPKNVGLKIAQFISTDTVMTPPMMDDNVKDGSLLLRRPKTLTGNSTWRVRYGILRDDVLQLFDKNQLTETIKLRQSSIELIPNLPEDRFGTRNGFLITEHKKSGLSTSTKYYICTETSKERELWLSAFSDYIDPSQSLSLSSSRNANDTDSASHLSAGTHHSKFGNATISATDTPSYVTDLTQEYNNNNNISNSSNNIANSDGIDSNPSSHSNFLASSSGNAEEEKDSRRAKMRSLFPFKKLTGPASAMNHIGITISNDSDSPTSPDSIIKSPSKKLMEVSSSSNSSTGPHVSTAIFGSSLETCLRLSSHKYQNVYDLPSVVYRCLEYLYKNRGIQEEGIFRLSGSSTVIKTLQERFDKEYDVDLCRYNESIEAKDDEASPSLYIGVNTVSGLLKLYLRKLPHLLFGDEQFLSFKRVVDENHNNPVQISLGFKELIESGLVPHANLSLMYALFELLVRINENSKFNKMNLRNLCIVFSPTLNIPISMLQPFITDFACIFQGGEPVKEEEREKVDIHIPQV.

The disordered stretch occupies residues 194–241; it reads SSPTKIHSEQLASPAASVTYTTSRITIKSPNKGSKSPLQERLRSPQNP. The span at 209 to 230 shows a compositional bias: polar residues; that stretch reads ASVTYTTSRITIKSPNKGSKSP. A Phosphoserine modification is found at S254. 2 disordered regions span residues 345–391 and 418–486; these read EDLV…TPLS and PVLT…RPHA. Positions 366–375 are enriched in pro residues; the sequence is LPPPPAPPTF. Polar residues-rich tracts occupy residues 382-391 and 420-478; these read GNIKNSTPLS and LTSS…QGSL. The 108-residue stretch at 634-741 folds into the PH domain; it reads DNVKDGSLLL…WLSAFSDYID (108 aa). Disordered regions lie at residues 746-777 and 796-838; these read LSLSSSRNANDTDSASHLSAGTHHSKFGNATI and NNNI…DSRR. Residues 752 to 764 show a composition bias toward polar residues; that stretch reads RNANDTDSASHLS. Residues 796–815 show a composition bias toward low complexity; that stretch reads NNNISNSSNNIANSDGIDSN. Residues 816 to 829 show a composition bias toward polar residues; it reads PSSHSNFLASSSGN. In terms of domain architecture, Rho-GAP spans 913–1128; the sequence is LRLSSHKYQN…EKVDIHIPQV (216 aa).

It localises to the cytoplasm. Functionally, GTPase-activating protein (GAP) for CDC42 and less efficiently for RHO1. Negative regulator of the pheromone-response pathway through the STE20 protein kinase. This chain is GTPase-activating protein BEM3 (BEM3), found in Saccharomyces cerevisiae (strain ATCC 204508 / S288c) (Baker's yeast).